A 68-amino-acid polypeptide reads, in one-letter code: Large ribosomal subunit protein uL29 (68 aa).

This sequence belongs to the universal ribosomal protein uL29 family.

This is Large ribosomal subunit protein uL29 from Streptococcus agalactiae serotype Ia (strain ATCC 27591 / A909 / CDC SS700).